Reading from the N-terminus, the 187-residue chain is MVNEFDKLRPGKLLLASANLLESNFKRTVLLMCEHNEQGSMGFILNRPMEFKVCEAIAGFEDIEEPLHMGGPVQVDTVHFIHSRGDSIDGAIEIFDGVFWGGDKDQLSYLINTGVINPNEIRFFLGYSGWGAGQLEQEFEEGSWYTADATREMIFTDAYERMWSRSVRSKGGEYRIVANSPELPGLN.

It belongs to the UPF0301 (AlgH) family.

The chain is UPF0301 protein Clim_0777 from Chlorobium limicola (strain DSM 245 / NBRC 103803 / 6330).